The sequence spans 447 residues: Bifunctional protein GlmU (447 aa).

Residues 1–225 (MLTVAILAAG…NGELQGINNR (225 aa)) form a pyrophosphorylase region. Residues 7 to 10 (LAAG), lysine 21, glutamine 73, and 78 to 79 (GT) each bind UDP-N-acetyl-alpha-D-glucosamine. Residue aspartate 103 coordinates Mg(2+). Glycine 140, glutamate 154, asparagine 169, and asparagine 223 together coordinate UDP-N-acetyl-alpha-D-glucosamine. A Mg(2+)-binding site is contributed by asparagine 223. The linker stretch occupies residues 226 to 246 (VQLSKCEETIQNLIKEKHMLG). Positions 247–447 (GVTFINPASC…QVNIENWKKN (201 aa)) are N-acetyltransferase. The UDP-N-acetyl-alpha-D-glucosamine site is built by arginine 328 and lysine 346. Histidine 358 acts as the Proton acceptor in catalysis. UDP-N-acetyl-alpha-D-glucosamine-binding residues include tyrosine 361 and asparagine 372. Residues alanine 375, alanine 418, and arginine 435 each contribute to the acetyl-CoA site.

This sequence in the N-terminal section; belongs to the N-acetylglucosamine-1-phosphate uridyltransferase family. The protein in the C-terminal section; belongs to the transferase hexapeptide repeat family. As to quaternary structure, homotrimer. The cofactor is Mg(2+).

It is found in the cytoplasm. It catalyses the reaction alpha-D-glucosamine 1-phosphate + acetyl-CoA = N-acetyl-alpha-D-glucosamine 1-phosphate + CoA + H(+). The enzyme catalyses N-acetyl-alpha-D-glucosamine 1-phosphate + UTP + H(+) = UDP-N-acetyl-alpha-D-glucosamine + diphosphate. It participates in nucleotide-sugar biosynthesis; UDP-N-acetyl-alpha-D-glucosamine biosynthesis; N-acetyl-alpha-D-glucosamine 1-phosphate from alpha-D-glucosamine 6-phosphate (route II): step 2/2. It functions in the pathway nucleotide-sugar biosynthesis; UDP-N-acetyl-alpha-D-glucosamine biosynthesis; UDP-N-acetyl-alpha-D-glucosamine from N-acetyl-alpha-D-glucosamine 1-phosphate: step 1/1. Its pathway is bacterial outer membrane biogenesis; LPS lipid A biosynthesis. Its function is as follows. Catalyzes the last two sequential reactions in the de novo biosynthetic pathway for UDP-N-acetylglucosamine (UDP-GlcNAc). The C-terminal domain catalyzes the transfer of acetyl group from acetyl coenzyme A to glucosamine-1-phosphate (GlcN-1-P) to produce N-acetylglucosamine-1-phosphate (GlcNAc-1-P), which is converted into UDP-GlcNAc by the transfer of uridine 5-monophosphate (from uridine 5-triphosphate), a reaction catalyzed by the N-terminal domain. This chain is Bifunctional protein GlmU, found in Prochlorococcus marinus (strain MIT 9515).